The sequence spans 253 residues: uncharacterized protein (253 aa).

Polar residues predominate over residues 175-184 (NPTQTSPGKP). The interval 175-253 (NPTQTSPGKP…ATENEDRLPS (79 aa)) is disordered. Position 180 is a phosphoserine (Ser180). 2 stretches are compositionally biased toward low complexity: residues 185-196 (STSESSQTDTST) and 203-214 (TPTTTRASSYTT). Residues 215 to 242 (LVSTSNQVSNEAEASAVETSANQAQNTE) show a composition bias toward polar residues.

This sequence belongs to the TRAPP small subunits family. BET3 subfamily.

This is an uncharacterized protein from Schizosaccharomyces pombe (strain 972 / ATCC 24843) (Fission yeast).